The following is a 96-amino-acid chain: Molybdopterin synthase sulfur carrier subunit (96 aa).

At Gly96 the chain carries 1-thioglycine; alternate. At Gly96 the chain carries Glycyl adenylate; alternate.

The protein belongs to the MoaD family. MOCS2A subfamily. As to quaternary structure, heterotetramer; composed of 2 small (MOCS2A) and 2 large (MOCS2B) subunits. Post-translationally, C-terminal thiocarboxylation occurs in 2 steps, it is first acyl-adenylated (-COAMP) via the hesA/moeB/thiF part of MOCS3, then thiocarboxylated (-COSH) via the rhodanese domain of MOCS3.

It is found in the cytoplasm. It functions in the pathway cofactor biosynthesis; molybdopterin biosynthesis. In terms of biological role, acts as a sulfur carrier required for molybdopterin biosynthesis. Component of the molybdopterin synthase complex that catalyzes the conversion of precursor Z into molybdopterin by mediating the incorporation of 2 sulfur atoms into precursor Z to generate a dithiolene group. In the complex, serves as sulfur donor by being thiocarboxylated (-COSH) at its C-terminus by MOCS3. After interaction with MOCS2B, the sulfur is then transferred to precursor Z to form molybdopterin. The polypeptide is Molybdopterin synthase sulfur carrier subunit (Arabidopsis thaliana (Mouse-ear cress)).